The primary structure comprises 126 residues: uncharacterized protein (126 aa).

This is an uncharacterized protein from His1 virus (isolate Australia/Victoria) (His1V).